A 292-amino-acid chain; its full sequence is Nitrogenase iron protein 2 (292 aa).

Residue 12–19 (GKGGIGKS) coordinates ATP. A [4Fe-4S] cluster-binding site is contributed by C97. The residue at position 100 (R100) is an ADP-ribosylarginine; by dinitrogenase reductase ADP-ribosyltransferase. Residue C133 coordinates [4Fe-4S] cluster.

The protein belongs to the NifH/BchL/ChlL family. Homodimer. [4Fe-4S] cluster serves as cofactor. The reversible ADP-ribosylation of Arg-100 inactivates the nitrogenase reductase and regulates nitrogenase activity.

The catalysed reaction is N2 + 8 reduced [2Fe-2S]-[ferredoxin] + 16 ATP + 16 H2O = H2 + 8 oxidized [2Fe-2S]-[ferredoxin] + 2 NH4(+) + 16 ADP + 16 phosphate + 6 H(+). In terms of biological role, the key enzymatic reactions in nitrogen fixation are catalyzed by the nitrogenase complex, which has 2 components: the iron protein and the molybdenum-iron protein. The protein is Nitrogenase iron protein 2 (nifH2) of Paenibacillus durus (Paenibacillus azotofixans).